A 109-amino-acid chain; its full sequence is Protein GOLVEN 5 (109 aa).

The signal sequence occupies residues 1–24; the sequence is MTNITSSFLCLLILLLFCLSFGYS. Positions 25-96 are excised as a propeptide; that stretch reads LHGDKDEVLS…EEDDLVAYTA (72 aa). The interval 54–88 is disordered; that stretch reads KKAQVRGRSGQEFSKETTKMMMKKTTKKETNVEEE. Y98 is subject to Sulfotyrosine. P106 bears the Hydroxyproline mark.

The protein belongs to the RGF family. Binds to LRR receptor-like serine/threonine-protein kinases RGI1, RGI2 and RGI3 to trigger their dimerization with SERK proteins and subsequent signaling. As to expression, expressed in root tips.

It localises to the secreted. Its function is as follows. Signaling peptide (root growth factor) that maintains the postembryonic root stem cell niche in a PIN2-traffic dependent manner. Root growth factor that regulates the pattern of root growth and lateral root development by modulating the length and the number of cortical cells in the root apical meristem (RAM), and the anticlinal asymmetric cell divisions in lateral root initiation cells. Influences the longitudinal growth rate in the primary root in response to phosphate ion (Pi)-deprivation. The chain is Protein GOLVEN 5 from Arabidopsis thaliana (Mouse-ear cress).